The sequence spans 204 residues: Thymidine kinase (204 aa).

ATP is bound by residues G23–T30 and D95–Q98. The active-site Proton acceptor is the E96. 4 residues coordinate Zn(2+): C152, C155, C184, and C187.

This sequence belongs to the thymidine kinase family. In terms of assembly, homotetramer.

Its subcellular location is the cytoplasm. The catalysed reaction is thymidine + ATP = dTMP + ADP + H(+). The chain is Thymidine kinase from Porphyromonas gingivalis (strain ATCC BAA-308 / W83).